Consider the following 109-residue polypeptide: Putative double-stranded DNA mimic protein KPK_2119 (109 aa).

It belongs to the putative dsDNA mimic protein family.

Functionally, may act as a double-stranded DNA (dsDNA) mimic. Probably regulates the activity of a dsDNA-binding protein. The polypeptide is Putative double-stranded DNA mimic protein KPK_2119 (Klebsiella pneumoniae (strain 342)).